We begin with the raw amino-acid sequence, 311 residues long: Elongation factor Ts (311 aa).

The interval 81-84 is involved in Mg(2+) ion dislocation from EF-Tu; that stretch reads TDFV.

It belongs to the EF-Ts family.

It is found in the cytoplasm. In terms of biological role, associates with the EF-Tu.GDP complex and induces the exchange of GDP to GTP. It remains bound to the aminoacyl-tRNA.EF-Tu.GTP complex up to the GTP hydrolysis stage on the ribosome. This Trichlorobacter lovleyi (strain ATCC BAA-1151 / DSM 17278 / SZ) (Geobacter lovleyi) protein is Elongation factor Ts.